The chain runs to 143 residues: Large ribosomal subunit protein uL11 (143 aa).

The protein belongs to the universal ribosomal protein uL11 family. As to quaternary structure, part of the ribosomal stalk of the 50S ribosomal subunit. Interacts with L10 and the large rRNA to form the base of the stalk. L10 forms an elongated spine to which L12 dimers bind in a sequential fashion forming a multimeric L10(L12)X complex. Post-translationally, one or more lysine residues are methylated.

In terms of biological role, forms part of the ribosomal stalk which helps the ribosome interact with GTP-bound translation factors. The protein is Large ribosomal subunit protein uL11 of Rhizobium etli (strain CIAT 652).